Reading from the N-terminus, the 600-residue chain is Integrator complex subunit 11 (600 aa).

Zn(2+) contacts are provided by His68, His70, Asp72, His73, His157, and Asp178. An HXHXDH motif motif is present at residues 68–73; the sequence is HFHLDH. The active site involves Glu203. Lys381 is covalently cross-linked (Glycyl lysine isopeptide (Lys-Gly) (interchain with G-Cter in SUMO)). His414 lines the Zn(2+) pocket. Residues Lys462 and Lys475 each participate in a glycyl lysine isopeptide (Lys-Gly) (interchain with G-Cter in SUMO) cross-link. Residues 469–479 carry the Nuclear localization signal motif; the sequence is LLPEAKKPRLL.

The protein belongs to the metallo-beta-lactamase superfamily. RNA-metabolizing metallo-beta-lactamase-like family. INTS11 subfamily. Component of the Integrator complex, composed of core subunits INTS1, INTS2, INTS3, INTS4, INTS5, INTS6, INTS7, INTS8, INTS9/RC74, INTS10, INTS11/CPSF3L, INTS12, INTS13, INTS14 and INTS15. The core complex associates with protein phosphatase 2A subunits PPP2CA and PPP2R1A, to form the Integrator-PP2A (INTAC) complex. INTS11 is part of the RNA endonuclease subcomplex, composed of INTS4, INTS9, INTS11 and inositol hexakisphosphate (InsP6). Interacts with WDR73; interaction is required for the assembly of the RNA endonuclease subcomplex in the cytoplasm. Interacts with BRAT1; interaction is required for the assembly of the RNA endonuclease subcomplex and inhibits the endonuclease activity of INTS11 before formation of mature integrator complex. Zn(2+) is required as a cofactor. Sumoylated; sumoylation regulates its subcellular location and is required for integrator complex integrity.

The protein localises to the nucleus. It localises to the cytoplasm. Its activity is regulated as follows. The RNA endonuclease activity is inhibited by BRAT1 that forms hyrogen bond and hydrophobic interactions with the active site. Functionally, RNA endonuclease component of the integrator complex, a multiprotein complex that terminates RNA polymerase II (Pol II) transcription in the promoter-proximal region of genes. The integrator complex provides a quality checkpoint during transcription elongation by driving premature transcription termination of transcripts that are unfavorably configured for transcriptional elongation: the complex terminates transcription by (1) catalyzing dephosphorylation of the C-terminal domain (CTD) of Pol II subunit POLR2A/RPB1 and SUPT5H/SPT5, (2) degrading the exiting nascent RNA transcript via endonuclease activity and (3) promoting the release of Pol II from bound DNA. The integrator complex is also involved in terminating the synthesis of non-coding Pol II transcripts, such as enhancer RNAs (eRNAs), small nuclear RNAs (snRNAs), telomerase RNAs and long non-coding RNAs (lncRNAs). Within the integrator complex, INTS11 constitutes the RNA endonuclease subunit that degrades exiting nascent RNA transcripts. Mediates recruitment of cytoplasmic dynein to the nuclear envelope, probably as component of the integrator complex. In Pongo abelii (Sumatran orangutan), this protein is Integrator complex subunit 11 (INTS11).